Reading from the N-terminus, the 286-residue chain is N-alpha-acetyltransferase 80 (286 aa).

The disordered stretch occupies residues 33 to 54 (TFNPGPTELTLDPEHQPEETPA). The N-acetyltransferase domain maps to 60-207 (LTLEPVHRRP…VFTSRRLPAT (148 aa)). Substrate contacts are provided by residues arginine 85 and 90-93 (RLHS). Acetyl-CoA contacts are provided by residues 141-143 (VVV), 149-154 (GRGFGR), and glutamine 179. The interval 212-269 (FPTAPSPRPPRKAPNLTAQAAPRGPKGPPLPPPPPLPECLTISPPVPSGPPSKSLLET) is disordered. Over residues 236 to 248 (PKGPPLPPPPPLP) the composition is skewed to pro residues.

This sequence belongs to the acetyltransferase family. In terms of tissue distribution, strongly expressed in heart and skeletal muscle, followed by brain and pancreas, with weak expression in kidney, liver, and lung and no expression in placenta.

The protein resides in the cytoplasm. The protein localises to the cytosol. The catalysed reaction is N-terminal L-aspartyl-L-aspartyl-L-aspartyl-[protein] + acetyl-CoA = N-terminal N-acetyl-L-aspartyl-L-aspartyl-L-aspartyl-[protein] + CoA + H(+). It catalyses the reaction N-terminal L-glutamyl-L-glutamyl-L-glutamyl-[protein] + acetyl-CoA = N-terminal N-acetyl-L-glutamyl-L-glutamyl-L-glutamyl-[protein] + CoA + H(+). In terms of biological role, N-alpha-acetyltransferase that specifically mediates the acetylation of the acidic amino terminus of processed forms of beta- and gamma-actin (ACTB and ACTG, respectively). N-terminal acetylation of processed beta- and gamma-actin regulates actin filament depolymerization and elongation. In vivo, preferentially displays N-terminal acetyltransferase activity towards acid N-terminal sequences starting with Asp-Asp-Asp and Glu-Glu-Glu. In vitro, shows high activity towards Met-Asp-Glu-Leu and Met-Asp-Asp-Asp. May act as a tumor suppressor. The polypeptide is N-alpha-acetyltransferase 80 (Homo sapiens (Human)).